A 126-amino-acid polypeptide reads, in one-letter code: Fluoride-specific ion channel FluC (126 aa).

4 helical membrane-spanning segments follow: residues 4–24, 35–55, 71–91, and 104–124; these read FMLLGFIAFGGAFGACARYLI, GFPYGTLTVNIVGSLIMGVLM, IIGLGFLGALTTFSTFSMDNV, and LNILLNVTLSITACFIGFQLM. 2 residues coordinate Na(+): glycine 78 and threonine 81.

Belongs to the fluoride channel Fluc/FEX (TC 1.A.43) family.

Its subcellular location is the cell inner membrane. It carries out the reaction fluoride(in) = fluoride(out). Na(+) is not transported, but it plays an essential structural role and its presence is essential for fluoride channel function. Functionally, fluoride-specific ion channel. Important for reducing fluoride concentration in the cell, thus reducing its toxicity. This chain is Fluoride-specific ion channel FluC, found in Aliivibrio salmonicida (strain LFI1238) (Vibrio salmonicida (strain LFI1238)).